Consider the following 185-residue polypeptide: Protein PBP4 (185 aa).

Low complexity-rich tracts occupy residues 1-24 (MTTT…LSAS) and 46-62 (AQAA…QQQQ). Disordered stretches follow at residues 1-116 (MTTT…YNRE) and 147-168 (ETAS…SKNK). Composition is skewed to polar residues over residues 73-83 (PANTKTKTIAS), 91-102 (KGSSTANGSSTN), and 147-166 (ETAS…SSSK).

As to quaternary structure, interacts with IGO1, LSM12 and PBP1.

The protein resides in the cytoplasm. The protein localises to the nucleus. This is Protein PBP4 (PBP4) from Saccharomyces cerevisiae (strain ATCC 204508 / S288c) (Baker's yeast).